Reading from the N-terminus, the 32-residue chain is Hainantoxin F8-35.23 (32 aa).

Expressed by the venom gland.

The protein resides in the secreted. The sequence is that of Hainantoxin F8-35.23 from Cyriopagopus hainanus (Chinese bird spider).